Here is a 459-residue protein sequence, read N- to C-terminus: Fibrinogen C domain-containing protein 1 (459 aa).

The interval 1–22 (MVHERWKTVGSASQLEDRPRDK) is disordered. Over 1 to 33 (MVHERWKTVGSASQLEDRPRDKPQRASCSYVLC) the chain is Cytoplasmic. A helical; Signal-anchor for type II membrane protein transmembrane segment spans residues 34-54 (TVLLSLAVLLAVAVTGVVLFL). Over 55–459 (NHTHTPGTAP…MKIRPVREDR (405 aa)) the chain is Extracellular. The Fibrinogen C-terminal domain occupies 233 to 456 (CANGSRPRDC…FSEMKIRPVR (224 aa)). Cysteine 242 and cysteine 271 are joined by a disulfide. A glycan (N-linked (GlcNAc...) asparagine) is linked at asparagine 338. Ca(2+) contacts are provided by aspartate 391 and aspartate 393. Cysteine 399 and cysteine 412 form a disulfide bridge.

As to quaternary structure, homotetramer; disulfide-linked.

It localises to the membrane. Acetyl group-binding receptor which shows a high-affinity and calcium-dependent binding to acetylated structures such as chitin, some N-acetylated carbohydrates, and amino acids, but not to their non-acetylated counterparts. Can facilitate the endocytosis of acetylated components. The sequence is that of Fibrinogen C domain-containing protein 1 (Fibcd1) from Mus musculus (Mouse).